The sequence spans 494 residues: Aspartyl/glutamyl-tRNA(Asn/Gln) amidotransferase subunit B (494 aa).

It belongs to the GatB/GatE family. GatB subfamily. As to quaternary structure, heterotrimer of A, B and C subunits.

The catalysed reaction is L-glutamyl-tRNA(Gln) + L-glutamine + ATP + H2O = L-glutaminyl-tRNA(Gln) + L-glutamate + ADP + phosphate + H(+). It carries out the reaction L-aspartyl-tRNA(Asn) + L-glutamine + ATP + H2O = L-asparaginyl-tRNA(Asn) + L-glutamate + ADP + phosphate + 2 H(+). Allows the formation of correctly charged Asn-tRNA(Asn) or Gln-tRNA(Gln) through the transamidation of misacylated Asp-tRNA(Asn) or Glu-tRNA(Gln) in organisms which lack either or both of asparaginyl-tRNA or glutaminyl-tRNA synthetases. The reaction takes place in the presence of glutamine and ATP through an activated phospho-Asp-tRNA(Asn) or phospho-Glu-tRNA(Gln). This chain is Aspartyl/glutamyl-tRNA(Asn/Gln) amidotransferase subunit B, found in Rhodopseudomonas palustris (strain ATCC BAA-98 / CGA009).